The following is a 418-amino-acid chain: Delta(14)-sterol reductase TM7SF2 (418 aa).

A run of 6 helical transmembrane segments spans residues 13–35 (FGGPLGVAALLILLPATMFHLLL), 62–81 (ALLLLFIWLGLQVALYLLPA), 102–124 (GFQALVLTALLMGLGVSVGLPLG), 129–148 (MLLPLAFATTLTSFIFSLLL), 255–277 (FGFMLVFGDLAWVPFTYSLQAQF), and 287–304 (LPMALLICLLKVIGYYIF). Residues K311, R315, L338, W343, and 350 to 351 (NY) each bind NADP(+). A helical transmembrane segment spans residues 355–377 (LIMALAWSLPCGLSHLLPYFYVL). NADP(+) contacts are provided by residues D390, 394-398 (CLQKY), and Y405.

This sequence belongs to the ERG4/ERG24 family. Strongly expressed in liver, weaker in ovary, testis, kidney and brain.

Its subcellular location is the endoplasmic reticulum membrane. The protein localises to the microsome membrane. It carries out the reaction 4,4-dimethyl-5alpha-cholesta-8,24-dien-3beta-ol + NADP(+) = 4,4-dimethyl-5alpha-cholesta-8,14,24-trien-3beta-ol + NADPH + H(+). The catalysed reaction is 5alpha-cholest-8,14-dien-3beta-ol + NADPH + H(+) = 5alpha-cholest-8-en-3beta-ol + NADP(+). The enzyme catalyses 4,4-dimethyl-8,14-cholestadien-3beta-ol + NADPH + H(+) = 4,4-dimethyl-5alpha-cholest-8-en-3beta-ol + NADP(+). The protein operates within steroid biosynthesis; cholesterol biosynthesis. Functionally, catalyzes the reduction of the C14-unsaturated bond of lanosterol, as part of the metabolic pathway leading to cholesterol biosynthesis. The protein is Delta(14)-sterol reductase TM7SF2 (Tm7sf2) of Mus musculus (Mouse).